We begin with the raw amino-acid sequence, 521 residues long: U4/U6 small nuclear ribonucleoprotein Prp4 (521 aa).

An N6-acetyllysine modification is found at lysine 26. WD repeat units lie at residues 228 to 267 (GDDRPISYCHFSPNSKMLATACWSGLCKLWSVPDCSLLHT), 270 to 317 (GHNT…PVAD), 320 to 359 (GHTVRVARVMWHPSGRFLGTTCYDRSWRLWDLEAQEEILH), 362 to 401 (GHSMGVYDIAFHQDGSLAGTGGLDAFGRVWDLRTGRCIMF), 404 to 443 (GHLKEIYGINFSPNGYHIATGSGDNTCKVWDLRQRRCVYT), 446 to 486 (AHQN…PLKT), and 489 to 521 (GHEGKVMGLDISSDGQLIATCSYDRTFKLWMAE).

Component of the precatalytic spliceosome (spliceosome B complex). Component of the U4/U6-U5 tri-snRNP complex, a building block of the precatalytic spliceosome (spliceosome B complex). The U4/U6-U5 tri-snRNP complex is composed of the U4, U6 and U5 snRNAs and at least PRPF3, PRPF4, PRPF6, PRPF8, PRPF31, SNRNP200, TXNL4A, SNRNP40, SNRPB, SNRPD1, SNRPD2, SNRPD3, SNRPE, SNRPF, SNRPG, DDX23, CD2BP2, PPIH, SNU13, EFTUD2, SART1 and USP39, plus LSM2, LSM3, LSM4, LSM5, LSM6, LSM7 and LSM8. Interacts directly with PRPF18, PPIH and PRPF3. Part of a heteromeric complex containing PPIH, PRPF3 and PRPF4 that is stable in the absence of RNA. Interacts with ERCC6.

The protein localises to the nucleus. It localises to the nucleus speckle. Functionally, plays a role in pre-mRNA splicing as component of the U4/U6-U5 tri-snRNP complex that is involved in spliceosome assembly, and as component of the precatalytic spliceosome (spliceosome B complex). This Mus musculus (Mouse) protein is U4/U6 small nuclear ribonucleoprotein Prp4 (Prpf4).